A 326-amino-acid polypeptide reads, in one-letter code: Tetraacyldisaccharide 4'-kinase (326 aa).

Residue 54-61 participates in ATP binding; that stretch reads SVGGTGKT.

The protein belongs to the LpxK family.

It carries out the reaction a lipid A disaccharide + ATP = a lipid IVA + ADP + H(+). It participates in glycolipid biosynthesis; lipid IV(A) biosynthesis; lipid IV(A) from (3R)-3-hydroxytetradecanoyl-[acyl-carrier-protein] and UDP-N-acetyl-alpha-D-glucosamine: step 6/6. Transfers the gamma-phosphate of ATP to the 4'-position of a tetraacyldisaccharide 1-phosphate intermediate (termed DS-1-P) to form tetraacyldisaccharide 1,4'-bis-phosphate (lipid IVA). This Rickettsia canadensis (strain McKiel) protein is Tetraacyldisaccharide 4'-kinase.